A 202-amino-acid polypeptide reads, in one-letter code: Glycerol-3-phosphate acyltransferase (202 aa).

Transmembrane regions (helical) follow at residues asparagine 3 to alanine 23, isoleucine 61 to leucine 81, leucine 87 to phenylalanine 107, glycine 118 to isoleucine 138, isoleucine 144 to asparagine 164, and leucine 167 to leucine 187.

The protein belongs to the PlsY family. In terms of assembly, probably interacts with PlsX.

It localises to the cell inner membrane. The enzyme catalyses an acyl phosphate + sn-glycerol 3-phosphate = a 1-acyl-sn-glycero-3-phosphate + phosphate. Its pathway is lipid metabolism; phospholipid metabolism. Functionally, catalyzes the transfer of an acyl group from acyl-phosphate (acyl-PO(4)) to glycerol-3-phosphate (G3P) to form lysophosphatidic acid (LPA). This enzyme utilizes acyl-phosphate as fatty acyl donor, but not acyl-CoA or acyl-ACP. In Campylobacter jejuni subsp. jejuni serotype O:23/36 (strain 81-176), this protein is Glycerol-3-phosphate acyltransferase.